Consider the following 229-residue polypeptide: MAGKNYRAAAAQVDRNMEYDLVDAVAKVKEITNVKFDATVDVAVKLGVDPRHADQVVRGTVMLPHGTGKTVSVLVVCKEAKAAEATEAGADLVGFEEYIEKIQNGWTGVDVIIATPDVMGQLGKVAKILGPRGLMPNPKSGTVTMDVAKAVKEVKAGKIEFRVDKAGNVHAPVGKASFPADQLVTNITSFLKEVMRLKPSAAKGQYVQGIAVSSTMSPGVRIKREKFVA.

This sequence belongs to the universal ribosomal protein uL1 family. As to quaternary structure, part of the 50S ribosomal subunit.

Functionally, binds directly to 23S rRNA. The L1 stalk is quite mobile in the ribosome, and is involved in E site tRNA release. Its function is as follows. Protein L1 is also a translational repressor protein, it controls the translation of the L11 operon by binding to its mRNA. The protein is Large ribosomal subunit protein uL1 of Chlorobium luteolum (strain DSM 273 / BCRC 81028 / 2530) (Pelodictyon luteolum).